A 423-amino-acid polypeptide reads, in one-letter code: UPF0229 protein PST_0721 (423 aa).

A disordered region spans residues 84–109 (AGERIPRPQGGGGGQGAGQASNSGEG).

The protein belongs to the UPF0229 family.

This Stutzerimonas stutzeri (strain A1501) (Pseudomonas stutzeri) protein is UPF0229 protein PST_0721.